The following is a 168-amino-acid chain: Protein-export protein SecB (168 aa).

This sequence belongs to the SecB family. As to quaternary structure, homotetramer, a dimer of dimers. One homotetramer interacts with 1 SecA dimer.

It localises to the cytoplasm. One of the proteins required for the normal export of preproteins out of the cell cytoplasm. It is a molecular chaperone that binds to a subset of precursor proteins, maintaining them in a translocation-competent state. It also specifically binds to its receptor SecA. The protein is Protein-export protein SecB of Saccharophagus degradans (strain 2-40 / ATCC 43961 / DSM 17024).